We begin with the raw amino-acid sequence, 571 residues long: Phosphoenolpyruvate-protein phosphotransferase (571 aa).

His189 functions as the Tele-phosphohistidine intermediate in the catalytic mechanism. Positions 296 and 332 each coordinate phosphoenolpyruvate. Mg(2+) is bound by residues Glu431 and Asp455. Residues 454–455 (ND) and Arg465 each bind phosphoenolpyruvate. The active-site Proton donor is Cys502.

Belongs to the PEP-utilizing enzyme family. As to quaternary structure, homodimer. Mg(2+) is required as a cofactor.

Its subcellular location is the cytoplasm. It catalyses the reaction L-histidyl-[protein] + phosphoenolpyruvate = N(pros)-phospho-L-histidyl-[protein] + pyruvate. In terms of biological role, general (non sugar-specific) component of the phosphoenolpyruvate-dependent sugar phosphotransferase system (sugar PTS). This major carbohydrate active-transport system catalyzes the phosphorylation of incoming sugar substrates concomitantly with their translocation across the cell membrane. Enzyme I transfers the phosphoryl group from phosphoenolpyruvate (PEP) to the phosphoryl carrier protein (HPr). This is Phosphoenolpyruvate-protein phosphotransferase (ptsI) from Buchnera aphidicola subsp. Acyrthosiphon pisum (strain APS) (Acyrthosiphon pisum symbiotic bacterium).